We begin with the raw amino-acid sequence, 376 residues long: Heme chaperone HemW (376 aa).

The Radical SAM core domain maps to M1 to K233. Residue Y10 coordinates S-adenosyl-L-methionine. Residues C16, C20, and C23 each contribute to the [4Fe-4S] cluster site. S-adenosyl-L-methionine-binding positions include G66, G67–T68, E99, Q126, R138, and D162.

The protein belongs to the anaerobic coproporphyrinogen-III oxidase family. HemW subfamily. Requires [4Fe-4S] cluster as cofactor.

The protein resides in the cytoplasm. Functionally, probably acts as a heme chaperone, transferring heme to an unknown acceptor. Binds one molecule of heme per monomer, possibly covalently. Binds 1 [4Fe-4S] cluster. The cluster is coordinated with 3 cysteines and an exchangeable S-adenosyl-L-methionine. This is Heme chaperone HemW from Buchnera aphidicola subsp. Acyrthosiphon pisum (strain APS) (Acyrthosiphon pisum symbiotic bacterium).